Reading from the N-terminus, the 195-residue chain is UPF0215 protein TK2033 (195 aa).

It belongs to the UPF0215 family.

This is UPF0215 protein TK2033 from Thermococcus kodakarensis (strain ATCC BAA-918 / JCM 12380 / KOD1) (Pyrococcus kodakaraensis (strain KOD1)).